The following is a 561-amino-acid chain: Zinc finger protein 37A (561 aa).

One can recognise a KRAB domain in the interval 8–79 (VSFRDVTVGF…EEKFPSQSHL (72 aa)). The C2H2-type 1; degenerate zinc finger occupies 146 to 168 (FEYNECGKAFPENSLFLVHKRGY). The C2H2-type 2; degenerate zinc-finger motif lies at 243–265 (IEYNECGTFFSEKLVLHLQQRTH). C2H2-type zinc fingers lie at residues 271–293 (YECH…QRTH), 299–321 (YECH…QRIH), 327–349 (YGCH…QRTH), 355–377 (YECH…QKTH), 383–405 (YECY…QRIH), 411–433 (YECN…LRTH), 439–461 (YECI…LRRH), 467–489 (FGCN…QRTH), 495–517 (YGCN…HRTH), and 523–545 (YECN…QRIH).

Belongs to the krueppel C2H2-type zinc-finger protein family.

The protein resides in the nucleus. Its function is as follows. May be involved in transcriptional regulation. The chain is Zinc finger protein 37A (ZNF37A) from Homo sapiens (Human).